Consider the following 247-residue polypeptide: Caffeoyl-CoA O-methyltransferase (247 aa).

Position 21 (K21) interacts with substrate. S-adenosyl-L-methionine-binding positions include T63, E85, 87 to 88, S93, D111, and A140; that span reads GV. D163 is a binding site for substrate. Position 163 (D163) interacts with a divalent metal cation. Residue D165 coordinates S-adenosyl-L-methionine. A divalent metal cation contacts are provided by D189 and N190. N194 contacts substrate.

Belongs to the class I-like SAM-binding methyltransferase superfamily. Cation-dependent O-methyltransferase family. CCoAMT subfamily. As to quaternary structure, homodimer. Ca(2+) is required as a cofactor. Mg(2+) serves as cofactor. Requires Zn(2+) as cofactor.

The enzyme catalyses (E)-caffeoyl-CoA + S-adenosyl-L-methionine = (E)-feruloyl-CoA + S-adenosyl-L-homocysteine + H(+). Its pathway is aromatic compound metabolism; phenylpropanoid biosynthesis. Functionally, methylates caffeoyl-CoA to feruloyl-CoA and 5-hydroxyferuloyl-CoA to sinapoyl-CoA. Plays a role in the synthesis of feruloylated polysaccharides. Involved in the reinforcement of the plant cell wall. Also involved in the responding to wounding or pathogen challenge by the increased formation of cell wall-bound ferulic acid polymers. This chain is Caffeoyl-CoA O-methyltransferase (CCOMT), found in Medicago sativa (Alfalfa).